The following is a 178-amino-acid chain: Translation initiation factor IF-3 (178 aa).

This sequence belongs to the IF-3 family. As to quaternary structure, monomer.

It localises to the cytoplasm. Functionally, IF-3 binds to the 30S ribosomal subunit and shifts the equilibrium between 70S ribosomes and their 50S and 30S subunits in favor of the free subunits, thus enhancing the availability of 30S subunits on which protein synthesis initiation begins. This chain is Translation initiation factor IF-3, found in Macrococcus caseolyticus (strain JCSC5402) (Macrococcoides caseolyticum).